Consider the following 152-residue polypeptide: Ribosome maturation factor RimP (152 aa).

Belongs to the RimP family.

It is found in the cytoplasm. Required for maturation of 30S ribosomal subunits. This is Ribosome maturation factor RimP from Rubrobacter xylanophilus (strain DSM 9941 / JCM 11954 / NBRC 16129 / PRD-1).